Here is a 105-residue protein sequence, read N- to C-terminus: Immunoglobulin lambda-like polypeptide 1 (105 aa).

Positions 1–105 (QPKSDPLVTL…EKSVSPAECS (105 aa)) are c region. Residues 6–100 (PLVTLFLPSL…EGNTVEKSVS (95 aa)) enclose the Ig-like C1-type domain. Residues cysteine 27 and cysteine 86 are joined by a disulfide bond.

Associates non-covalently with VPREB1A. Interacts with SYNV1/HRD1 (via N-terminus); this interaction leads to increased IGLL1 ubiquitination and degradation in pre-B cells, possibly through a lysosomal, not proteasomal, pathway.

The protein resides in the endoplasmic reticulum. Its subcellular location is the secreted. Critical for B-cell development. This is Immunoglobulin lambda-like polypeptide 1 (Igll1) from Mus spretus (Western Mediterranean mouse).